A 532-amino-acid chain; its full sequence is Hepatocyte nuclear factor 1-beta-B (532 aa).

A dimerization region spans residues 1–35 (MFTDMVSKLTSLQQELLSALLDSGVTKDVLVQALE). The region spanning 5–36 (MVSKLTSLQQELLSALLDSGVTKDVLVQALED) is the HNF-p1 domain. A disordered region spans residues 74-95 (TGAQGKGGKLSGDEGSEDGDDF). One can recognise a POU-specific atypical domain in the interval 102–197 (RELQSLNTEE…IDRQFDRVQG (96 aa)). The span at 222–231 (SSGAAGGSGA) shows a compositional bias: gly residues. Disordered regions lie at residues 222-245 (SSGAAGGSGAAVGDEGEPGSKRMR) and 500-532 (EAGQFSHPSRYSTMDSSTITHLGSSKQCPLQAW). Positions 244–324 (MRRNRFKWGP…NRRKEEAFRQ (81 aa)) form a DNA-binding region, homeobox; HNF1-type. A compositionally biased stretch (polar residues) spans 505–532 (SHPSRYSTMDSSTITHLGSSKQCPLQAW).

The protein belongs to the HNF1 homeobox family. As to quaternary structure, binds DNA as a dimer. Can form homodimer or heterodimer with HNF1-alpha. In terms of tissue distribution, first expressed at stage 10 in the intermediate mesoderm. Expressed in rhombomere r5 by 14 hpf with expression diminishing by 18 hpf.

Its subcellular location is the nucleus. Its function is as follows. Transcription factor that binds to the inverted palindrome 5'-GTTAATNATTAAC-3'. Acts downstream of hnf1ba but is not required for induction of rhombomere r5/r6 gene expression in the hindbrain. The chain is Hepatocyte nuclear factor 1-beta-B from Danio rerio (Zebrafish).